Here is a 295-residue protein sequence, read N- to C-terminus: Tyrosine recombinase XerD (295 aa).

One can recognise a Core-binding (CB) domain in the interval 1–85 (METIIEEYLR…TIRSFHQFAI (85 aa)). A Tyr recombinase domain is found at 106-289 (KLPDVLNVDE…SKSQIRKMYN (184 aa)). Active-site residues include arginine 146, lysine 170, histidine 241, arginine 244, and histidine 267. Tyrosine 276 functions as the O-(3'-phospho-DNA)-tyrosine intermediate in the catalytic mechanism.

This sequence belongs to the 'phage' integrase family. XerD subfamily. In terms of assembly, forms a cyclic heterotetrameric complex composed of two molecules of XerC and two molecules of XerD.

It localises to the cytoplasm. Functionally, site-specific tyrosine recombinase, which acts by catalyzing the cutting and rejoining of the recombining DNA molecules. The XerC-XerD complex is essential to convert dimers of the bacterial chromosome into monomers to permit their segregation at cell division. It also contributes to the segregational stability of plasmids. The sequence is that of Tyrosine recombinase XerD from Staphylococcus aureus (strain COL).